Reading from the N-terminus, the 56-residue chain is VTGPAPLKFAGVNIAGFDYDALVQAXLNXGYLDSDNSGTLAINTETGGGNTASXVE.

Glu-45 acts as the Nucleophile in catalysis.

This sequence belongs to the glycosyl hydrolase 5 (cellulase A) family.

The protein localises to the secreted. The protein resides in the extracellular space. It carries out the reaction Endohydrolysis of (1-&gt;4)-beta-D-glucosidic linkages in cellulose, lichenin and cereal beta-D-glucans.. Functionally, has avicelase and carboxymethylcellulase activity. This chain is Endoglucanase Cel5A, found in Gloeophyllum trabeum (Brown rot fungus).